The chain runs to 1263 residues: DNA-directed RNA polymerase subunit beta (1263 aa).

It belongs to the RNA polymerase beta chain family. As to quaternary structure, the RNAP catalytic core consists of 2 alpha, 1 beta, 1 beta' and 1 omega subunit. When a sigma factor is associated with the core the holoenzyme is formed, which can initiate transcription.

The catalysed reaction is RNA(n) + a ribonucleoside 5'-triphosphate = RNA(n+1) + diphosphate. Its function is as follows. DNA-dependent RNA polymerase catalyzes the transcription of DNA into RNA using the four ribonucleoside triphosphates as substrates. The protein is DNA-directed RNA polymerase subunit beta of Thermotoga maritima (strain ATCC 43589 / DSM 3109 / JCM 10099 / NBRC 100826 / MSB8).